The sequence spans 205 residues: Nuclear transcription factor Y subunit beta (205 aa).

The interval 1–50 (MDGDSSTTDASQLGIAGDYIGGSHYVIQPHDDTEDSMNDHEDTNGSKESF) is a domain. A disordered region spans residues 24–50 (HYVIQPHDDTEDSMNDHEDTNGSKESF). The segment covering 37-50 (MNDHEDTNGSKESF) has biased composition (basic and acidic residues). The tract at residues 51 to 140 (REQDIYLPIA…PLKLYLQKFR (90 aa)) is b domain. Residues 57–63 (LPIANVA) mediate DNA binding. Residues 84–95 (VQECVSEFISFI) form a subunit association domain (SAD) region. Residues 141–201 (EAMKGEKGIG…SYQQISGVQQ (61 aa)) form a c domain region.

It belongs to the NFYB/HAP3 subunit family. In terms of assembly, heterotrimeric transcription factor composed of three components, NF-YA, NF-YB and NF-YC. NF-YB and NF-YC must interact and dimerize for NF-YA association and DNA binding.

Its subcellular location is the nucleus. In terms of biological role, component of the sequence-specific heterotrimeric transcription factor (NF-Y) which specifically recognizes a 5'-CCAAT-3' box motif found in the promoters of its target genes. NF-Y can function as both an activator and a repressor, depending on its interacting cofactors. This Gallus gallus (Chicken) protein is Nuclear transcription factor Y subunit beta (NFYB).